Consider the following 259-residue polypeptide: Deoxyribose-phosphate aldolase (259 aa).

Catalysis depends on Asp-102, which acts as the Proton donor/acceptor. The Schiff-base intermediate with acetaldehyde role is filled by Lys-167. Lys-201 serves as the catalytic Proton donor/acceptor.

This sequence belongs to the DeoC/FbaB aldolase family. DeoC type 2 subfamily.

The protein localises to the cytoplasm. The catalysed reaction is 2-deoxy-D-ribose 5-phosphate = D-glyceraldehyde 3-phosphate + acetaldehyde. It participates in carbohydrate degradation; 2-deoxy-D-ribose 1-phosphate degradation; D-glyceraldehyde 3-phosphate and acetaldehyde from 2-deoxy-alpha-D-ribose 1-phosphate: step 2/2. Its function is as follows. Catalyzes a reversible aldol reaction between acetaldehyde and D-glyceraldehyde 3-phosphate to generate 2-deoxy-D-ribose 5-phosphate. The protein is Deoxyribose-phosphate aldolase of Escherichia coli O8 (strain IAI1).